A 218-amino-acid chain; its full sequence is Esterase FPY3 (218 aa).

Active-site charge relay system residues include serine 95, aspartate 163, and histidine 190.

Belongs to the LovG family.

It functions in the pathway secondary metabolite biosynthesis. Its function is as follows. Esterase; part of the gene cluster that mediates the biosynthesis of the gamma-pyrones fusapyrone (FPY) and deoxyfusapyrone (dFPY). FPY is an undecaketide and thus likely synthesized by the polyketide synthase FPY1 from acetyl-CoA functioning as starter unit and the addition of 10 malonyl-CoA extender units by successive Claisen-condensations. Next to this, FPY shares some rare features: C-glycosylated 4-deoxyglucose at C-3, a gem-dimethyl group at C-13, and an alpha-beta to beta-gamma double bond shift at C-20. During FPY biosynthesis mono-C-methyl groups are transferred to the tetra-, penta-, hexa- and heptaketide, while two C-methyl groups are transferred to the nonaketide, suggesting that the CMet domain is programmed to selectively catalyze two successive C-alpha-methylation reactions of the nonaketide, while other alpha-carbons are non- or mono-methylated only. While the origin of the 4'-deoxyglucose moiety remains opaque, its transfer to C-3 is most likely mediated by the C-glycosyltransferase FPY2. Next to this, the hydroxyl group present at C-33 and discriminating between FPY and dFPY, is likely to be installed by the cytochrome P450 monooxygenase FPY7. No putative function can be predicted for the remaining genes FPY3-FPY6. This Fusarium mangiferae (Mango malformation disease fungus) protein is Esterase FPY3.